Consider the following 285-residue polypeptide: Glutamate racemase (285 aa).

Substrate contacts are provided by residues 30-31 and 62-63; these read DS and YG. The active-site Proton donor/acceptor is the cysteine 94. 95 to 96 serves as a coordination point for substrate; sequence NT. Cysteine 206 serves as the catalytic Proton donor/acceptor. 207 to 208 contributes to the substrate binding site; sequence TH.

This sequence belongs to the aspartate/glutamate racemases family.

It carries out the reaction L-glutamate = D-glutamate. The protein operates within cell wall biogenesis; peptidoglycan biosynthesis. Its function is as follows. Provides the (R)-glutamate required for cell wall biosynthesis. The chain is Glutamate racemase from Pectobacterium carotovorum subsp. carotovorum (strain PC1).